The primary structure comprises 685 residues: Beta-taxilin (685 aa).

Residues methionine 1–lysine 135 are disordered. Residues glycine 18–proline 28 are compositionally biased toward polar residues. Composition is skewed to basic and acidic residues over residues glycine 47–glutamate 67 and arginine 80–glutamate 90. Residues proline 98 to aspartate 113 are compositionally biased toward acidic residues. 2 coiled-coil regions span residues lysine 138–glutamate 354 and asparagine 381–glutamate 470. Over residues lysine 465–glutamate 478 the composition is skewed to basic and acidic residues. Disordered regions lie at residues lysine 465–asparagine 497 and glutamate 517–aspartate 685. Phosphoserine occurs at positions 477, 484, and 486. Over residues glutamate 479–glutamate 495 the composition is skewed to acidic residues. Low complexity predominate over residues cysteine 575–glutamate 591. Residues alanine 612–leucine 627 show a composition bias toward polar residues.

This sequence belongs to the taxilin family. In terms of assembly, binds to the C-terminal coiled coil region of syntaxin family members STX1A, STX3A and STX4A. Has a preference for STX1A. Specifically expressed in skeletal muscle.

Promotes motor nerve regeneration. May be involved in intracellular vesicle traffic. The chain is Beta-taxilin (Txlnb) from Mus musculus (Mouse).